The sequence spans 380 residues: Ubiquitin-like protein 7 (380 aa).

Positions 18–98 constitute a Ubiquitin-like domain; sequence TPKSILRLPE…VLRKSWPEPD (81 aa). The segment at 200–313 is disordered; sequence APMPGTDSSS…SSGVQSGTPI (114 aa). Residues 206-221 are compositionally biased toward low complexity; the sequence is DSSSRSMPSSSYRDMP. The residue at position 230 (Ser-230) is a Phosphoserine. Composition is skewed to low complexity over residues 240 to 253 and 270 to 293; these read TRST…SSRP and SELA…TPGT. The segment covering 294–313 has biased composition (polar residues); sequence QGHSSGTSPMSSGVQSGTPI. A UBA domain is found at 333-377; it reads SLQSQWQPQLQQLRDMGIQDDELSLRALQATGGDIQAALELIFAG.

In terms of assembly, binds ubiquitin. Interacts with MAVS; this interaction enhances TRIM21-dependent 'Lys-27'-linked polyubiquitination of MAVS. In terms of processing, deubiquitinated by OTUD4 which stabilizes UBL7 expression. In terms of tissue distribution, ubiquitous. Highly expressed in heart, skeletal muscle, testis, thyroid and adrenal gland.

In terms of biological role, interferon-stimulated protein that positively regulates RNA virus-triggered innate immune signaling. Mechanistically, promotes 'Lys-27'-linked polyubiquitination of MAVS through TRIM21 leading to enhanced the IFN signaling pathway. The chain is Ubiquitin-like protein 7 (UBL7) from Homo sapiens (Human).